Consider the following 430-residue polypeptide: Glutamyl-tRNA reductase (430 aa).

Substrate-binding positions include 49 to 52 (TCNR), serine 109, 114 to 116 (EGQ), and glutamine 120. Cysteine 50 functions as the Nucleophile in the catalytic mechanism. 189–194 (GAGKMA) lines the NADP(+) pocket.

This sequence belongs to the glutamyl-tRNA reductase family. As to quaternary structure, homodimer.

The enzyme catalyses (S)-4-amino-5-oxopentanoate + tRNA(Glu) + NADP(+) = L-glutamyl-tRNA(Glu) + NADPH + H(+). Its pathway is porphyrin-containing compound metabolism; protoporphyrin-IX biosynthesis; 5-aminolevulinate from L-glutamyl-tRNA(Glu): step 1/2. The protein operates within porphyrin-containing compound metabolism; chlorophyll biosynthesis. Functionally, catalyzes the NADPH-dependent reduction of glutamyl-tRNA(Glu) to glutamate 1-semialdehyde (GSA). The protein is Glutamyl-tRNA reductase of Crocosphaera subtropica (strain ATCC 51142 / BH68) (Cyanothece sp. (strain ATCC 51142)).